The primary structure comprises 369 residues: tRNA-specific 2-thiouridylase MnmA (369 aa).

Residues 11–18 and methionine 37 each bind ATP; that span reads GMSGGVDS. Positions 97-99 are interaction with target base in tRNA; that stretch reads NPD. The Nucleophile role is filled by cysteine 102. The cysteines at positions 102 and 199 are disulfide-linked. Residue glycine 127 coordinates ATP. The interval 149-151 is interaction with tRNA; that stretch reads KDQ. Cysteine 199 functions as the Cysteine persulfide intermediate in the catalytic mechanism. The tract at residues 311-312 is interaction with tRNA; the sequence is RY.

This sequence belongs to the MnmA/TRMU family. As to quaternary structure, interacts with TusE.

It is found in the cytoplasm. The catalysed reaction is S-sulfanyl-L-cysteinyl-[protein] + uridine(34) in tRNA + AH2 + ATP = 2-thiouridine(34) in tRNA + L-cysteinyl-[protein] + A + AMP + diphosphate + H(+). Its function is as follows. Catalyzes the 2-thiolation of uridine at the wobble position (U34) of tRNA(Lys), tRNA(Glu) and tRNA(Gln), leading to the formation of s(2)U34, the first step of tRNA-mnm(5)s(2)U34 synthesis. Sulfur is provided by IscS, via a sulfur-relay system. Binds ATP and its substrate tRNAs. The sequence is that of tRNA-specific 2-thiouridylase MnmA from Enterobacter sp. (strain 638).